Here is a 293-residue protein sequence, read N- to C-terminus: Ribosomal protein L11 methyltransferase (293 aa).

Residues Thr-145, Gly-166, Asp-188, and Asn-230 each coordinate S-adenosyl-L-methionine.

Belongs to the methyltransferase superfamily. PrmA family.

The protein localises to the cytoplasm. The enzyme catalyses L-lysyl-[protein] + 3 S-adenosyl-L-methionine = N(6),N(6),N(6)-trimethyl-L-lysyl-[protein] + 3 S-adenosyl-L-homocysteine + 3 H(+). Methylates ribosomal protein L11. In Yersinia pseudotuberculosis serotype I (strain IP32953), this protein is Ribosomal protein L11 methyltransferase.